Here is a 588-residue protein sequence, read N- to C-terminus: Polyamine deacetylase HDAC10 (588 aa).

A histone deacetylase region spans residues 1–302; it reads MGTALVYHED…AGGRICAVLE (302 aa). Residue H135 is part of the active site.

It belongs to the histone deacetylase family. HD type 2 subfamily. Interacts with HDAC3. Interacts with HDAC2 and NCOR2/SMRT. Interacts with HSPA8/HSC70. Interacts with MSH2.

The protein resides in the cytoplasm. The protein localises to the nucleus. It carries out the reaction N(8)-acetylspermidine + H2O = spermidine + acetate. It catalyses the reaction N-acetylputrescine + H2O = putrescine + acetate. The catalysed reaction is N-acetylcadaverine + H2O = cadaverine + acetate. The enzyme catalyses N(6)-acetyl-L-lysyl-[protein] + H2O = L-lysyl-[protein] + acetate. Functionally, polyamine deacetylase (PDAC), which acts preferentially on N(8)-acetylspermidine, and also on acetylcadaverine and acetylputrescine. Exhibits attenuated catalytic activity toward N(1),N(8)-diacetylspermidine and very low activity, if any, toward N(1)-acetylspermidine. Histone deacetylase activity has been observed in vitro. Has also been shown to be involved in MSH2 deacetylation. The physiological relevance of protein/histone deacetylase activity is unclear and could be very weak. May play a role in the promotion of late stages of autophagy, possibly autophagosome-lysosome fusion and/or lysosomal exocytosis in neuroblastoma cells. May play a role in homologous recombination. May promote DNA mismatch repair. The protein is Polyamine deacetylase HDAC10 (Hdac10) of Rattus norvegicus (Rat).